Consider the following 358-residue polypeptide: Fructose-bisphosphate aldolase 7, cytosolic (358 aa).

At serine 2 the chain carries N-acetylserine. Arginine 52 is a binding site for substrate. Cysteine 68 bears the S-glutathionyl cysteine; transient mark. Residue lysine 142 participates in substrate binding. S-glutathionyl cysteine; transient; alternate is present on cysteine 173. Cysteine 173 is modified (S-nitrosocysteine; transient; alternate). The Proton acceptor role is filled by glutamate 183. The active-site Schiff-base intermediate with dihydroxyacetone-P is the lysine 225. 266-268 is a substrate binding site; sequence SGI.

It belongs to the class I fructose-bisphosphate aldolase family. In terms of assembly, homotetramer. S-glutathionylated at Cys-68 and Cys-173. Post-translationally, S-nitrosylated at Cys-173. In terms of tissue distribution, highly expressed in flowers, and at lower levels in rosettes leaves and cauline leaves.

The protein resides in the cytoplasm. Its subcellular location is the cytosol. It catalyses the reaction beta-D-fructose 1,6-bisphosphate = D-glyceraldehyde 3-phosphate + dihydroxyacetone phosphate. It functions in the pathway carbohydrate degradation; glycolysis; D-glyceraldehyde 3-phosphate and glycerone phosphate from D-glucose: step 4/4. In terms of biological role, plays a key role in glycolysis and gluconeogenesis. The polypeptide is Fructose-bisphosphate aldolase 7, cytosolic (Arabidopsis thaliana (Mouse-ear cress)).